The following is a 460-amino-acid chain: ATP synthase subunit beta (460 aa).

150 to 157 lines the ATP pocket; the sequence is GGAGVGKT.

The protein belongs to the ATPase alpha/beta chains family. In terms of assembly, F-type ATPases have 2 components, CF(1) - the catalytic core - and CF(0) - the membrane proton channel. CF(1) has five subunits: alpha(3), beta(3), gamma(1), delta(1), epsilon(1). CF(0) has three main subunits: a(1), b(2) and c(9-12). The alpha and beta chains form an alternating ring which encloses part of the gamma chain. CF(1) is attached to CF(0) by a central stalk formed by the gamma and epsilon chains, while a peripheral stalk is formed by the delta and b chains.

The protein localises to the cell inner membrane. The catalysed reaction is ATP + H2O + 4 H(+)(in) = ADP + phosphate + 5 H(+)(out). In terms of biological role, produces ATP from ADP in the presence of a proton gradient across the membrane. The catalytic sites are hosted primarily by the beta subunits. The polypeptide is ATP synthase subunit beta (Salmonella gallinarum (strain 287/91 / NCTC 13346)).